Here is a 293-residue protein sequence, read N- to C-terminus: Movement protein BC1 (293 aa).

It belongs to the begomovirus movement protein BC1 family. In terms of assembly, binds to dimeric supercoiled plasmid DNA. Phosphorylated.

Its subcellular location is the host cell membrane. The protein localises to the host microsome membrane. The protein resides in the host endoplasmic reticulum membrane. Functionally, transports viral genome to neighboring plant cells directly through plasmosdesmata, without any budding. The movement protein allows efficient cell to cell propagation, by bypassing the host cell wall barrier. Begomovirus genome is shuttled out of nucleus by Nuclear shuttle protein (NSP) and the movement protein transports the DNA-NSP complex to cell plasmodesmata and facilitates further movement across the cell wall. The sequence is that of Movement protein BC1 from Macroptilium lathyroides (Lima bean).